We begin with the raw amino-acid sequence, 423 residues long: D-tagatose-1,6-bisphosphate aldolase subunit GatZ (423 aa).

Belongs to the GatZ/KbaZ family. GatZ subfamily. Forms a complex with GatY.

It participates in carbohydrate metabolism; D-tagatose 6-phosphate degradation; D-glyceraldehyde 3-phosphate and glycerone phosphate from D-tagatose 6-phosphate: step 2/2. In terms of biological role, component of the tagatose-1,6-bisphosphate aldolase GatYZ that is required for full activity and stability of the Y subunit. Could have a chaperone-like function for the proper and stable folding of GatY. When expressed alone, GatZ does not show any aldolase activity. Is involved in the catabolism of galactitol. The protein is D-tagatose-1,6-bisphosphate aldolase subunit GatZ of Salmonella typhimurium (strain LT2 / SGSC1412 / ATCC 700720).